The chain runs to 592 residues: V-type ATP synthase alpha chain 1 (592 aa).

ATP is bound at residue 233–240; the sequence is GPFGSGKT.

It belongs to the ATPase alpha/beta chains family.

It catalyses the reaction ATP + H2O + 4 H(+)(in) = ADP + phosphate + 5 H(+)(out). Functionally, produces ATP from ADP in the presence of a proton gradient across the membrane. The V-type alpha chain is a catalytic subunit. The polypeptide is V-type ATP synthase alpha chain 1 (Clostridium tetani (strain Massachusetts / E88)).